The chain runs to 359 residues: D-alanine--D-alanine ligase (359 aa).

An ATP-grasp domain is found at 141–346 (KRIFKEAGLP…YSTLLDELIN (206 aa)). 172–227 (IEHLGYPCFVKPANLGSSVGITKVHNEEELPGALKLAAKYDRKLLIERGIDAREIE) lines the ATP pocket. 3 residues coordinate Mg(2+): Asp299, Glu313, and Asn315.

The protein belongs to the D-alanine--D-alanine ligase family. It depends on Mg(2+) as a cofactor. Requires Mn(2+) as cofactor.

The protein resides in the cytoplasm. It carries out the reaction 2 D-alanine + ATP = D-alanyl-D-alanine + ADP + phosphate + H(+). The protein operates within cell wall biogenesis; peptidoglycan biosynthesis. Its function is as follows. Cell wall formation. The protein is D-alanine--D-alanine ligase of Thermoanaerobacter pseudethanolicus (strain ATCC 33223 / 39E) (Clostridium thermohydrosulfuricum).